We begin with the raw amino-acid sequence, 117 residues long: 3',5'-cyclic-AMP phosphodiesterase 4A (117 aa).

The tract at residues 42-79 (KQNEVEIPSPTMKDREPQEAPRQRPCQQLPPPVPHLQP) is disordered. Over residues 53–63 (MKDREPQEAPR) the composition is skewed to basic and acidic residues. A catalytic region spans residues 78–117 (QPMSQITGVKRLSHNSGLNNASIPRFGVKTDQEELLAQEL).

The protein belongs to the cyclic nucleotide phosphodiesterase family. PDE4 subfamily. Interacts with LYN (via SH3 domain). Interacts with ARRB2. The cofactor is Zn(2+). It depends on Mg(2+) as a cofactor. Mn(2+) is required as a cofactor. In terms of processing, proteolytically cleaved by CASP3.

It is found in the cytoplasm. The protein resides in the cytosol. It localises to the membrane. It catalyses the reaction 3',5'-cyclic AMP + H2O = AMP + H(+). Its pathway is purine metabolism; 3',5'-cyclic AMP degradation; AMP from 3',5'-cyclic AMP: step 1/1. Functionally, hydrolyzes the second messenger 3',5'-cyclic AMP (cAMP), which is a key regulator of many important physiological processes. In Cavia porcellus (Guinea pig), this protein is 3',5'-cyclic-AMP phosphodiesterase 4A (PDE4A).